The primary structure comprises 296 residues: MEQFRNIGIIGRLGSVQVLETVRRLKRFLLDRHLHVILEETIAEVLPGHGLQTSSRKMLGEVCDMVIVVGGDGSLLGAARALARHNVPVLGINRGSLGFLTDIRPDELEVKCAEVLDGHYLVENRFLLQAEVRRHGEAIGQGDALNDVVLHPGKSTRMIEFEIYIDGQFVCSQKADGLIVATPTGSTAYALSAGGPIMHPKLDAIVIVPMYPHTLSGRPIVVDGNSELKIVVSKDMTIYPQVSCDGQNHFTCAPGDTITVSKKPQKLRLIHPLDHNYYEVCRTKLGWGSKLGGGGD.

Asp72 (proton acceptor) is an active-site residue. Residues 72 to 73 (DG), 146 to 147 (ND), Arg157, Lys174, Asp176, 187 to 192 (TAYALS), and Gln247 each bind NAD(+).

The protein belongs to the NAD kinase family. It depends on a divalent metal cation as a cofactor.

It localises to the cytoplasm. The catalysed reaction is NAD(+) + ATP = ADP + NADP(+) + H(+). Functionally, involved in the regulation of the intracellular balance of NAD and NADP, and is a key enzyme in the biosynthesis of NADP. Catalyzes specifically the phosphorylation on 2'-hydroxyl of the adenosine moiety of NAD to yield NADP. This Pseudomonas syringae pv. syringae (strain B728a) protein is NAD kinase.